The following is a 338-amino-acid chain: 1-aminocyclopropane-1-carboxylate deaminase (338 aa).

Lys-51 bears the N6-(pyridoxal phosphate)lysine mark. The active-site Nucleophile is Ser-78.

It belongs to the ACC deaminase/D-cysteine desulfhydrase family. In terms of assembly, homotrimer. The cofactor is pyridoxal 5'-phosphate.

The enzyme catalyses 1-aminocyclopropane-1-carboxylate + H2O = 2-oxobutanoate + NH4(+). In terms of biological role, catalyzes a cyclopropane ring-opening reaction, the irreversible conversion of 1-aminocyclopropane-1-carboxylate (ACC) to ammonia and alpha-ketobutyrate. Allows growth on ACC as a nitrogen source. The sequence is that of 1-aminocyclopropane-1-carboxylate deaminase from Burkholderia thailandensis (strain ATCC 700388 / DSM 13276 / CCUG 48851 / CIP 106301 / E264).